The sequence spans 163 residues: Cytochrome b6-f complex subunit 4 (163 aa).

The next 3 membrane-spanning stretches (helical) occupy residues 36–56 (LLYI…GLAV), 95–115 (LLGV…PFLE), and 131–151 (TVFL…TLPI).

Belongs to the cytochrome b family. PetD subfamily. As to quaternary structure, the 4 large subunits of the cytochrome b6-f complex are cytochrome b6, subunit IV (17 kDa polypeptide, petD), cytochrome f and the Rieske protein, while the 4 small subunits are petG, petL, petM and petN. The complex functions as a dimer.

The protein resides in the plastid. It localises to the chloroplast thylakoid membrane. Component of the cytochrome b6-f complex, which mediates electron transfer between photosystem II (PSII) and photosystem I (PSI), cyclic electron flow around PSI, and state transitions. This is Cytochrome b6-f complex subunit 4 from Pelargonium hortorum (Common geranium).